The primary structure comprises 72 residues: Heat-stable enterotoxin A2 (72 aa).

The first 19 residues, 1-19, serve as a signal peptide directing secretion; it reads MKKSILFIFLSVLSFSPFA. A propeptide spanning residues 20–53 is cleaved from the precursor; the sequence is QDAKPAGSSKEKITLESKKCNIVKKNNESSPESM. 3 disulfide bridges follow: cysteine 59–cysteine 64, cysteine 60–cysteine 68, and cysteine 63–cysteine 71.

The protein belongs to the heat-stable enterotoxin family.

The protein localises to the secreted. Its function is as follows. Toxin which activates the particulate form of guanylate cyclase and increases cyclic GMP levels within the host intestinal epithelial cells. The chain is Heat-stable enterotoxin A2 (sta2) from Escherichia coli.